The primary structure comprises 326 residues: WRKY transcription factor 8 (326 aa).

A disordered region spans residues 115 to 172 (VRVSASPSSSEADHHPGEDSGKIRKKREVRDGGEDDQRSQKVVKTKKKEEKKKEPRVS). Composition is skewed to basic and acidic residues over residues 125–153 (EADH…DQRS) and 161–170 (KKEEKKKEPR). Positions 177 to 242 (TEVDHLEDGY…YESQHNHPIP (66 aa)) form a DNA-binding region, WRKY.

The protein belongs to the WRKY group II-c family. In terms of assembly, interacts with VQ9 (via N-terminus). As to expression, highly expressed in roots and at lower levels in rosette leaves, cauline leaves, stems, flowers and siliques.

Its subcellular location is the nucleus. Transcription factor. Interacts specifically with the W box (5'-TTGAC[CT]-3'), a frequently occurring stress-responsive cis-acting element. Functions as a positive regulator of salt stress response. Binds the W box of LTI78/RD29A stress-response gene and directly regulates its transcription under salt stress. Functions antagonistically with VQ9 to regulate sodium and potassium homeostasis under salt stress by regulating the expression of downstream SOS (SALT OVERLY SENSITIVE) stress-responsive genes. The DNA-binding activity of WRKY8 is decreased by VQ9. Functions as a negative regulator of basal resistance to the bacterial pathogen P.syringae and as positive regulator of resistance to the fungal pathogen to B.cinerea. Functions as a positive regulator of defense response againt tobamovirus (TMV) by regulating both the abscisic acid and ethylene signaling pathways. Positively regulates ABI4 expression and negatively modulates ACS6 and ERF104 expression by directly binding to the W box consensus motifs within their promoters. The protein is WRKY transcription factor 8 (WRKY8) of Arabidopsis thaliana (Mouse-ear cress).